The sequence spans 247 residues: Programmed cell death 1 ligand 2 (247 aa).

A signal peptide spans 1–19; it reads MLLLLPILNLSLQLHPVAA. Over 20-221 the chain is Extracellular; that stretch reads LFTVTAPKEV…RMEPKVPRTW (202 aa). The 98-residue stretch at 21 to 118 folds into the Ig-like V-type domain; it reads FTVTAPKEVY…AWDYKYLTVK (98 aa). 2 disulfide bridges follow: Cys-42–Cys-102 and Cys-143–Cys-192. N-linked (GlcNAc...) asparagine glycosylation is found at Asn-64, Asn-157, Asn-163, and Asn-189. The Ig-like C2-type domain maps to 122–203; the sequence is SYMRIDTRIL…FWNAHMKELT (82 aa). Residues 222 to 242 form a helical membrane-spanning segment; that stretch reads PLHVFIPACTIALIFLAIVII. Topologically, residues 243–247 are cytoplasmic; sequence QRKRI.

This sequence belongs to the immunoglobulin superfamily. BTN/MOG family. Interacts with PDCD1. Expressed in immature and mature bone marrow-derived dendritic cells and splenic dendritic cells. Highly expressed in placenta, liver and weakly expressed in heart, spleen, lymph nodes and thymus. Also expressed in some tumor cell lines of lymphoid origin.

Its subcellular location is the cell membrane. Functionally, involved in the costimulatory signal essential for T-cell proliferation and IFNG production in a PDCD1-independent manner. Interaction with PDCD1 inhibits T-cell proliferation by blocking cell cycle progression and cytokine production. This is Programmed cell death 1 ligand 2 (Pdcd1lg2) from Mus musculus (Mouse).